The following is a 1208-amino-acid chain: MKSLAGHVVKYGKHRERRSFARISEVLELPNLIEIQTDSYQWFLDEGLREMFEDILPIDDFNGNLSLEFVDYELKEPKYTVAEARAHDANYSAPLHVTLRLTNRETGEIKAQEVFFGDFPLMTEQGTFIINGAERVIVSQLVRSPGVYFHGKVDKNGKEGFGSTVIPNRGAWLEMETDAKDISYVRIDRTRKIPLTVLVRALGFGSDDTIFEIFGDSETLRNTVEKDLHKNASDSRTEEGLKDVYERLRPGEPKTADSSRNLLNARFFDPKRYDLANVGRYKVNKKLDLKTRLLNLTLAETLVDPETGEIIVEKGTVLTHQVMETLAPFIDNGLNSGTYYPSEDGVVTDPMTVQVIKVFSPRDPEREVNVIGNGYPEAAVKTVRPADIIASMSYFLNLMEGIGNVDDIDHLGNRRIRSVGELLQNQFRIGLARMERVVRERMSIQDTETLTPQQLINIRPVVASIKEFFGSSQLSQFMDQTNPLGELTHKRRLSALGPGGLTRDRAGYEVRDVHYSHYGRMCPIETPEGPNIGLINSLSSYAKVNKFGFIETPYRRVDRETGRVTDQIDYLTADIEDHYIVAQANSPLNEDGTFAQDVVMARAQSENLEVSIDKVDYMDVSPKQVVAVATACIPFLENDDSNRALMGANMQRQAVPLINPQAPWVGTGMEYKSAHDSGAALLCKHDGVVEYVDASEIRVRRDNGALDKYDVTKFRRSNSGTSYNQRPIVHLGEKVEKGVTLADGPSMEQGEMALGQNVLVGFMTWEGYNYEDAIIMSRRLVKDDVYTSIHIEEYESEARDTKLGPEEITREIPNVGEDALKDLDEMGIIRIGAEVQDGDLLVGKVTPKGVTELSAEERLLHAIFGEKAREVRDTSLRVPHGGGGIVHDVKIFTREAGDELSPGVNMLVRVYIVQKRKIHEGDKMAGRHGNKGVVSRIMPEEDMPFLPDGTPIDIMLNPLGVPSRMNIGQVLELHLGMAARQLGIHVATPVFDGASDEDVWETVREAGMASDAKTVLYDGRTGEPFDGRVSVGVMYMIKLAHMVDDKLHARSIGPYSLVTQQPLGGKAQFGGQRFGEMEVWALEAYGAAYTLQEILTYKSDDVVGRVKTYEAIVKGEPIPKPGVPESFRVLVKELQSLGLDMRVLDIEETEIELRDMDDEDDDLITVDALTKFAEQQTAKELEKKAAEQVEDEKDDVIQNFETAEDNLD.

Residues 1182–1208 are disordered; that stretch reads EKKAAEQVEDEKDDVIQNFETAEDNLD.

Belongs to the RNA polymerase beta chain family. The RNAP catalytic core consists of 2 alpha, 1 beta, 1 beta' and 1 omega subunit. When a sigma factor is associated with the core the holoenzyme is formed, which can initiate transcription.

The catalysed reaction is RNA(n) + a ribonucleoside 5'-triphosphate = RNA(n+1) + diphosphate. Functionally, DNA-dependent RNA polymerase catalyzes the transcription of DNA into RNA using the four ribonucleoside triphosphates as substrates. The protein is DNA-directed RNA polymerase subunit beta of Enterococcus faecium (Streptococcus faecium).